Consider the following 404-residue polypeptide: Serine/threonine transporter SstT (404 aa).

The next 8 helical transmembrane spans lie at 17-37, 39-59, 75-95, 138-158, 179-199, 212-232, 287-307, and 313-333; these read IGIG…LTGF, ILGK…VFAL, MTLI…VAVL, ALAT…GLAL, IVVW…FTTI, FLIL…NPLI, IPLG…VLTL, and FGIP…AVSA.

It belongs to the dicarboxylate/amino acid:cation symporter (DAACS) (TC 2.A.23) family.

It localises to the cell membrane. It carries out the reaction L-serine(in) + Na(+)(in) = L-serine(out) + Na(+)(out). It catalyses the reaction L-threonine(in) + Na(+)(in) = L-threonine(out) + Na(+)(out). In terms of biological role, involved in the import of serine and threonine into the cell, with the concomitant import of sodium (symport system). The sequence is that of Serine/threonine transporter SstT from Streptococcus pyogenes serotype M5 (strain Manfredo).